An 879-amino-acid chain; its full sequence is DNA mismatch repair protein MutS (879 aa).

629-636 (GPNMAGKS) serves as a coordination point for ATP.

Belongs to the DNA mismatch repair MutS family.

Functionally, this protein is involved in the repair of mismatches in DNA. It is possible that it carries out the mismatch recognition step. This protein has a weak ATPase activity. The protein is DNA mismatch repair protein MutS of Ruegeria sp. (strain TM1040) (Silicibacter sp.).